The following is a 261-amino-acid chain: Fructoselysine 6-kinase (261 aa).

This sequence belongs to the carbohydrate kinase PfkB family. Monomer.

The catalysed reaction is N(6)-(D-fructosyl)-L-lysine + ATP = N(6)-(6-phospho-D-fructosyl)-L-lysine + ADP + H(+). It functions in the pathway carbohydrate metabolism; fructoselysine degradation; D-glucose 6-phosphate and lysine from fructoselysine: step 1/2. Catalyzes the ATP-dependent phosphorylation of fructoselysine to fructoselysine 6-phosphate. May function in a fructoselysine degradation pathway that allows S.flexneri to grow on fructoselysine or psicoselysine. In Shigella flexneri, this protein is Fructoselysine 6-kinase (frlD).